The primary structure comprises 74 residues: NADH dehydrogenase [ubiquinone] 1 alpha subcomplex assembly factor 8 (74 aa).

The CHCH domain maps to 22 to 69 (LAACGAEASAYGKCVQASTAPGGRLSKDLCVREFEALRSCFAAAAKKT). Short sequence motifs (cx9C motif) lie at residues 25-35 (CGAEASAYGKC) and 51-61 (CVREFEALRSC). Disulfide bonds link cysteine 25–cysteine 61 and cysteine 35–cysteine 51.

As to quaternary structure, interacts with NDUFAF5.

It localises to the mitochondrion. Involved in the assembly of mitochondrial NADH:ubiquinone oxidoreductase complex (complex I, MT-ND1). Required to stabilize NDUFAF5. The protein is NADH dehydrogenase [ubiquinone] 1 alpha subcomplex assembly factor 8 of Mus musculus (Mouse).